Here is a 490-residue protein sequence, read N- to C-terminus: Thyroid hormone receptor alpha (490 aa).

Positions 1 to 32 (MEQKPSKVECGSDPEENSARSPDGKRKRKNGQ) are disordered. The segment at 1–52 (MEQKPSKVECGSDPEENSARSPDGKRKRKNGQCSLKTSMSGYIPSYLDKDEQ) is modulating. Zn(2+) is bound by residues Cys53, Cys56, Cys70, Cys73, Cys91, Cys97, Cys107, and Cys110. NR C4-type zinc fingers lie at residues 53 to 73 (CVVCGDKATGYHYRCITCEGC) and 91 to 115 (CKYDSCCVIDKITRNQCQLCRFKKC). A DNA-binding region (nuclear receptor) is located at residues 53-127 (CVVCGDKATG…VGMAMDLVLD (75 aa)). The NR LBD domain maps to 163 to 407 (EEWDLIHIAT…EGQQLLGMHV (245 aa)). 2 residues coordinate 3,3',5-triiodo-L-thyronine: Arg228 and Ser277. Residues 457–490 (AVCGEDDSSEADSPSSSEEEPEVCEDLAGNAASP) form a disordered region.

The protein belongs to the nuclear hormone receptor family. NR1 subfamily. In terms of assembly, binds DNA as a dimer; homodimer and heterodimer with RXRB. Interacts with NCOA3 and NCOA6 coactivators, leading to a strong increase of transcription of target genes. Probably interacts with SFPQ. Interacts with C1D. Interacts with AKAP13. Interacts with TP53INP2. Interacts with PER2. Isoform alpha-2 and isoform alpha-1 interact with TACC1, but the interaction with alpha-1 is weaker. The interaction with isoform alpha-1, but not alpha-2, is decreased in the presence of thyroid hormone T3.

The protein resides in the nucleus. The protein localises to the cytoplasm. Its function is as follows. Nuclear hormone receptor that can act as a repressor or activator of transcription. High affinity receptor for thyroid hormones, including triiodothyronine and thyroxine. Functionally, does not bind thyroid hormone and functions as a weak dominant negative inhibitor of thyroid hormone action. The polypeptide is Thyroid hormone receptor alpha (THRA) (Homo sapiens (Human)).